A 105-amino-acid chain; its full sequence is Antitoxin YfjZ (105 aa).

Belongs to the CbeA/YafW/YfjZ antitoxin family.

Antitoxin component of a type IV toxin-antitoxin (TA) system. Antitoxin that counteracts the effect of cognate toxin YpjF. Also counteracts the effect of non-cognate toxins CbtA and YfkI. The sequence is that of Antitoxin YfjZ (yfjZ) from Escherichia coli (strain K12).